We begin with the raw amino-acid sequence, 362 residues long: Probable dual-specificity RNA methyltransferase RlmN (362 aa).

Glu-105 serves as the catalytic Proton acceptor. Residues 111–344 (HEYGNSICVT…VTIRREQGHD (234 aa)) enclose the Radical SAM core domain. Cys-118 and Cys-349 are disulfide-bonded. Residues Cys-125, Cys-129, and Cys-132 each contribute to the [4Fe-4S] cluster site. S-adenosyl-L-methionine is bound by residues 175–176 (GE), Ser-207, 230–232 (SLH), and Asn-306. Catalysis depends on Cys-349, which acts as the S-methylcysteine intermediate.

It belongs to the radical SAM superfamily. RlmN family. [4Fe-4S] cluster is required as a cofactor.

It is found in the cytoplasm. It catalyses the reaction adenosine(2503) in 23S rRNA + 2 reduced [2Fe-2S]-[ferredoxin] + 2 S-adenosyl-L-methionine = 2-methyladenosine(2503) in 23S rRNA + 5'-deoxyadenosine + L-methionine + 2 oxidized [2Fe-2S]-[ferredoxin] + S-adenosyl-L-homocysteine. The enzyme catalyses adenosine(37) in tRNA + 2 reduced [2Fe-2S]-[ferredoxin] + 2 S-adenosyl-L-methionine = 2-methyladenosine(37) in tRNA + 5'-deoxyadenosine + L-methionine + 2 oxidized [2Fe-2S]-[ferredoxin] + S-adenosyl-L-homocysteine. Specifically methylates position 2 of adenine 2503 in 23S rRNA and position 2 of adenine 37 in tRNAs. This is Probable dual-specificity RNA methyltransferase RlmN from Bacillus cereus (strain B4264).